Here is a 1158-residue protein sequence, read N- to C-terminus: ATP-dependent helicase/deoxyribonuclease subunit B (1158 aa).

Belongs to the helicase family. AddB/RexB type 2 subfamily. In terms of assembly, heterodimer of AddA and RexB. Requires Mg(2+) as cofactor.

Its function is as follows. The heterodimer acts as both an ATP-dependent DNA helicase and an ATP-dependent, dual-direction single-stranded exonuclease. Recognizes the chi site generating a DNA molecule suitable for the initiation of homologous recombination. This subunit has 5' -&gt; 3' nuclease activity but not helicase activity. The chain is ATP-dependent helicase/deoxyribonuclease subunit B from Lactobacillus johnsonii (strain CNCM I-12250 / La1 / NCC 533).